The sequence spans 185 residues: MAKQDPTSSNTMLPLVGSEFVRPQPLDLTITGDTVKDATGNKVFKVKTPLFGLHNKRILVDPNDSPIVTMKMKVTSKHDRWQVYRGSDLDDKIFTVKRSSTVQLKTRVEVFLKHNQTRESSCDFTIKGRFMKRACTIYVADSTKIIAQVYEGHERLVATIYPNVDYAFIVTLIFIFDLINMGTGI.

This sequence belongs to the LOR family.

In terms of biological role, might be related to the phospholipid scramblase and tubby-like superfamily of membrane tethered transcription factors. The chain is Protein LURP-one-related 13 from Arabidopsis thaliana (Mouse-ear cress).